Consider the following 520-residue polypeptide: Protein U4 (520 aa).

It belongs to the herpesviridae U4 family.

The protein is Protein U4 of Elephantid herpesvirus 1 (isolate Asian elephant/Berlin/Kiba/1998) (EIHV-1).